The sequence spans 472 residues: MPQNRSMESQAYSLPLILPDLRREEAIHQITDTLQHLQTVSNDIFSRILQRVETNRGQLQRINGRLSLAQAKIERLKGIKKAIKVFSSAKYPAPEHLQEYSSVFAGAEDGWLAKKLRHKIQSKHRPLDEQAVQEKLKYFPVCVNTRGQDEESAEEGLGSLPRNISSVSSLLLFNTTENLYKKYVFLDPLAGVVTRTNPALEGEDEEKLFDAPLSITKREQLERQTAENYFYVPDLGQVPEIDVPYSLPDLPGVADDLMYSADLGPGIAPSAPGVPIPELPTFITEDITENSRTDSQDGRLLPPPPPPPPPPPPPPPPEPSVLSPPTSLAPPLPIPAPARVGSSDVGDPGSLQGAPKEVVNPSDGRASLLESIRQAGGIGKAKLRNVKEKKLEKKKMKEQEQVRATGGGGDLMSDLFNKLAMRRKGISGKGPAAGEASGDGPTGAFARISDTIPPLPPPDQASGDGDEEDWES.

Residues 1 to 51 (MPQNRSMESQAYSLPLILPDLRREEAIHQITDTLQHLQTVSNDIFSRILQR) form a required for WASH complex assembly region. Disordered regions lie at residues 289–365 (ENSR…SDGR), 377–412 (GIGKAKLRNVKEKKLEKKKMKEQEQVRATGGGGDLM), and 426–472 (ISGK…DWES). Pro residues-rich tracts occupy residues 301–319 (LPPPPPPPPPPPPPPPPEP) and 327–336 (SLAPPLPIPA). The VCA stretch occupies residues 352-472 (QGAPKEVVNP…GDGDEEDWES (121 aa)). Residues 364-386 (GRASLLESIRQAGGIGKAKLRNV) form the WH2 domain. The span at 385–401 (NVKEKKLEKKKMKEQEQ) shows a compositional bias: basic and acidic residues.

This sequence belongs to the WASH1 family. Component of the WASH complex.

It localises to the early endosome membrane. The protein localises to the recycling endosome membrane. In terms of biological role, acts as a nucleation-promoting factor at the surface of endosomes, where it recruits and activates the Arp2/3 complex to induce actin polymerization, playing a key role in the fission of tubules that serve as transport intermediates during endosome sorting. In Xenopus tropicalis (Western clawed frog), this protein is WASH complex subunit 1.